Reading from the N-terminus, the 201-residue chain is ATP-dependent Clp protease proteolytic subunit (201 aa).

Residue Ser-101 is the Nucleophile of the active site. His-126 is an active-site residue.

The protein belongs to the peptidase S14 family. Component of the chloroplastic Clp protease core complex.

It localises to the plastid. The protein resides in the chloroplast stroma. The catalysed reaction is Hydrolysis of proteins to small peptides in the presence of ATP and magnesium. alpha-casein is the usual test substrate. In the absence of ATP, only oligopeptides shorter than five residues are hydrolyzed (such as succinyl-Leu-Tyr-|-NHMec, and Leu-Tyr-Leu-|-Tyr-Trp, in which cleavage of the -Tyr-|-Leu- and -Tyr-|-Trp bonds also occurs).. Functionally, cleaves peptides in various proteins in a process that requires ATP hydrolysis. Has a chymotrypsin-like activity. Plays a major role in the degradation of misfolded proteins. In Chlorella vulgaris (Green alga), this protein is ATP-dependent Clp protease proteolytic subunit.